A 486-amino-acid polypeptide reads, in one-letter code: Pentatricopeptide repeat-containing protein At2g01860 (486 aa).

Residues 111–137 (QKPDKPSRVRPLPLPQPHKLRPLGLPT) form a disordered region. PPR repeat units follow at residues 290-321 (DSSV…LKKR), 327-361 (SQQD…NREP), 362-396 (SVVM…NCLL), 397-431 (DLPA…GFSP), and 432-466 (TYDI…GLRL).

It belongs to the PPR family. P subfamily.

This is Pentatricopeptide repeat-containing protein At2g01860 (EMB975) from Arabidopsis thaliana (Mouse-ear cress).